A 218-amino-acid chain; its full sequence is Octanoyltransferase (218 aa).

Residues 31-206 (EETPDEVWLV…ELVNLLGYEQ (176 aa)) enclose the BPL/LPL catalytic domain. Residues 70–77 (RGGQVTYH), 137–139 (SLG), and 150–152 (GLA) each bind substrate. The Acyl-thioester intermediate role is filled by cysteine 168.

It belongs to the LipB family.

It localises to the cytoplasm. It carries out the reaction octanoyl-[ACP] + L-lysyl-[protein] = N(6)-octanoyl-L-lysyl-[protein] + holo-[ACP] + H(+). It functions in the pathway protein modification; protein lipoylation via endogenous pathway; protein N(6)-(lipoyl)lysine from octanoyl-[acyl-carrier-protein]: step 1/2. Its function is as follows. Catalyzes the transfer of endogenously produced octanoic acid from octanoyl-acyl-carrier-protein onto the lipoyl domains of lipoate-dependent enzymes. Lipoyl-ACP can also act as a substrate although octanoyl-ACP is likely to be the physiological substrate. The chain is Octanoyltransferase from Vibrio vulnificus (strain YJ016).